A 472-amino-acid chain; its full sequence is ATP-dependent rRNA helicase rrp3 (472 aa).

A disordered region spans residues 1–51 (MPDVKKRKIAHEAPEHGSDAESTSSHESVAQQDDTAETQDEAAATETRPAP). Residues 10–19 (AHEAPEHGSD) are compositionally biased toward basic and acidic residues. Positions 20–29 (AESTSSHESV) are enriched in polar residues. Positions 52–80 (KSFKDLGIIDQLCEACETMGYKAPTPIQA) match the Q motif motif. One can recognise a Helicase ATP-binding domain in the interval 83–254 (IPLALQGRDL…RASLSNPLRV (172 aa)). Residue 96-103 (AETGSGKT) participates in ATP binding. Positions 202–205 (DEAD) match the DEAD box motif. A Helicase C-terminal domain is found at 282-426 (YLVYLLNEFV…EYELEKDEVM (145 aa)). Positions 451 to 472 (GTKAKKFGKGKRSRDEMDQEEG) are disordered. Positions 452–462 (TKAKKFGKGKR) are enriched in basic residues.

This sequence belongs to the DEAD box helicase family. DDX47/RRP3 subfamily. In terms of assembly, interacts with the SSU processome.

The protein localises to the nucleus. It catalyses the reaction ATP + H2O = ADP + phosphate + H(+). Its function is as follows. ATP-dependent rRNA helicase required for pre-ribosomal RNA processing. Involved in the maturation of the 35S-pre-rRNA and to its cleavage to mature 18S rRNA. This chain is ATP-dependent rRNA helicase rrp3, found in Neosartorya fischeri (strain ATCC 1020 / DSM 3700 / CBS 544.65 / FGSC A1164 / JCM 1740 / NRRL 181 / WB 181) (Aspergillus fischerianus).